The following is a 947-amino-acid chain: Protein translocase subunit SecA 1 (947 aa).

ATP is bound by residues Gln-87, 105–109, and Asp-525; that span reads GEGKT. The disordered stretch occupies residues 907–937; the sequence is DDADKAARDPNRPETWGKVGRNEDCPCNSGK. Residues 908 to 918 are compositionally biased toward basic and acidic residues; sequence DADKAARDPNR. Cys-931, Cys-933, Cys-942, and His-943 together coordinate Zn(2+).

The protein belongs to the SecA family. In terms of assembly, monomer and homodimer. Part of the essential Sec protein translocation apparatus which comprises SecA, SecYEG and auxiliary proteins SecDF-YajC and YidC. It depends on Zn(2+) as a cofactor.

It is found in the cell inner membrane. It localises to the cytoplasm. The enzyme catalyses ATP + H2O + cellular proteinSide 1 = ADP + phosphate + cellular proteinSide 2.. Part of the Sec protein translocase complex. Interacts with the SecYEG preprotein conducting channel. Has a central role in coupling the hydrolysis of ATP to the transfer of proteins into and across the cell membrane, serving both as a receptor for the preprotein-SecB complex and as an ATP-driven molecular motor driving the stepwise translocation of polypeptide chains across the membrane. The polypeptide is Protein translocase subunit SecA 1 (Rhodopseudomonas palustris (strain BisA53)).